The chain runs to 268 residues: Orotidine 5'-phosphate decarboxylase (268 aa).

Residues Asp-37, 59 to 61 (KTH), 91 to 100 (DRKFADIGNT), Tyr-217, and Arg-235 each bind substrate. Lys-93 serves as the catalytic Proton donor.

This sequence belongs to the OMP decarboxylase family.

The catalysed reaction is orotidine 5'-phosphate + H(+) = UMP + CO2. Its pathway is pyrimidine metabolism; UMP biosynthesis via de novo pathway; UMP from orotate: step 2/2. The polypeptide is Orotidine 5'-phosphate decarboxylase (URA4) (Maudiozyma exigua (Yeast)).